The primary structure comprises 122 residues: Small ribosomal subunit protein uS13 (122 aa).

Residues 97 to 122 (PVRGQRTHTNARTRKGPAKAIAGKKK) form a disordered region.

The protein belongs to the universal ribosomal protein uS13 family. Part of the 30S ribosomal subunit. Forms a loose heterodimer with protein S19. Forms two bridges to the 50S subunit in the 70S ribosome.

In terms of biological role, located at the top of the head of the 30S subunit, it contacts several helices of the 16S rRNA. In the 70S ribosome it contacts the 23S rRNA (bridge B1a) and protein L5 of the 50S subunit (bridge B1b), connecting the 2 subunits; these bridges are implicated in subunit movement. Contacts the tRNAs in the A and P-sites. The protein is Small ribosomal subunit protein uS13 of Rhizobium rhizogenes (strain K84 / ATCC BAA-868) (Agrobacterium radiobacter).